A 383-amino-acid polypeptide reads, in one-letter code: Putative glutamate--cysteine ligase 2 (383 aa).

Belongs to the glutamate--cysteine ligase type 2 family. YbdK subfamily.

The catalysed reaction is L-cysteine + L-glutamate + ATP = gamma-L-glutamyl-L-cysteine + ADP + phosphate + H(+). Functionally, ATP-dependent carboxylate-amine ligase which exhibits weak glutamate--cysteine ligase activity. The chain is Putative glutamate--cysteine ligase 2 from Clavibacter sepedonicus (Clavibacter michiganensis subsp. sepedonicus).